The sequence spans 461 residues: Asparagine--tRNA ligase (461 aa).

Belongs to the class-II aminoacyl-tRNA synthetase family. Homodimer.

The protein resides in the cytoplasm. The catalysed reaction is tRNA(Asn) + L-asparagine + ATP = L-asparaginyl-tRNA(Asn) + AMP + diphosphate + H(+). In Geobacter sulfurreducens (strain ATCC 51573 / DSM 12127 / PCA), this protein is Asparagine--tRNA ligase.